Here is a 437-residue protein sequence, read N- to C-terminus: Ribosomal protein uS12 methylthiotransferase RimO (437 aa).

One can recognise an MTTase N-terminal domain in the interval P4–P114. Positions 13, 49, 78, 145, 149, and 152 each coordinate [4Fe-4S] cluster. One can recognise a Radical SAM core domain in the interval L131–T369. The TRAM domain maps to A372–V437.

Belongs to the methylthiotransferase family. RimO subfamily. [4Fe-4S] cluster serves as cofactor.

Its subcellular location is the cytoplasm. The catalysed reaction is L-aspartate(89)-[ribosomal protein uS12]-hydrogen + (sulfur carrier)-SH + AH2 + 2 S-adenosyl-L-methionine = 3-methylsulfanyl-L-aspartate(89)-[ribosomal protein uS12]-hydrogen + (sulfur carrier)-H + 5'-deoxyadenosine + L-methionine + A + S-adenosyl-L-homocysteine + 2 H(+). Functionally, catalyzes the methylthiolation of an aspartic acid residue of ribosomal protein uS12. This is Ribosomal protein uS12 methylthiotransferase RimO from Mesorhizobium japonicum (strain LMG 29417 / CECT 9101 / MAFF 303099) (Mesorhizobium loti (strain MAFF 303099)).